Consider the following 131-residue polypeptide: Cuticle protein 79, isoform A (131 aa).

Repeat copies occupy residues Ala-37 to Ala-40, Ala-45 to Ala-48, and Ala-53 to Ala-56.

In terms of biological role, component of the cuticle of migratory locust which contains more than 100 different structural proteins. This is Cuticle protein 79, isoform A from Locusta migratoria (Migratory locust).